Here is a 677-residue protein sequence, read N- to C-terminus: MAAHHRQNTAGRRKVQVSYVIRDEVEKYNRNGVNALQLDPALNRLFTAGRDSIIRIWSVNQHKQDPYIASMEHHTDWVNDIVLCCNGKTLISASSDTTVKVWNAHKGFCMSTLRTHKDYVKALAYAKDKELVASAGLDRQIFLWDVNTLTALTASNNTVTTSSLSGNKDSIYSLAMNQLGTIIVSGSTEKVLRVWDPRTCAKLMKLKGHTDNVKALLLNRDGTQCLSGSSDGTIRLWSLGQQRCIATYRVHDEGVWALQVNDAFTHVYSGGRDRKIYCTDLRNPDIRVLICEEKAPVLKMELDRSADPPPAIWVATTKSTVNKWTLKGIHNFRASGDYDNDCTNPITPLCTQPDQVIKGGASIIQCHILNDKRHILTKDTNNNVAYWDVLKACKVEDLGKVDFEDEIKKRFKMVYVPNWFSVDLKTGMLTITLDESDCFAAWVSAKDAGFSSPDGSDPKLNLGGLLLQALLEYWPRTHVNPMDEEENEVNHVNGEQENRVQKGNGYFQVPPHTPVIFGEAGGRTLFRLLCRDSGGETESMLLNETVPQWVIDITVDKNMPKFNKIPFYLQPHASSGAKTLKKDRLSASDMLQVRKVMEHVYEKIINLDNESQTTSSSNNEKPGEQEKEEDIAVLAEEKIELLCQDQVLDPNMDLRTVKHFIWKSGGDLTLHYRQKST.

Residue Tyr-28 is modified to Phosphotyrosine. 8 WD repeats span residues 28–67, 73–112, 115–154, 166–205, 208–247, 250–289, 292–334, and 358–397; these read YNRN…QDPY, HHTD…CMST, THKD…ALTA, GNKD…KLMK, GHTD…CIAT, VHDE…IRVL, EEKA…NFRA, and KGGA…KVED. Lys-214 is subject to N6-acetyllysine. Lys-578 is modified (N6-acetyllysine). Residues 607–628 form a disordered region; that stretch reads LDNESQTTSSSNNEKPGEQEKE. Low complexity predominate over residues 609-620; it reads NESQTTSSSNNE. At Thr-613 the chain carries Phosphothreonine.

Belongs to the WD repeat WDR48 family. In terms of assembly, interacts with USP46. Interacts with USP1. Interacts with USP12. Component of the USP12-WDR20-WDR48 deubiquitinating complex. Component of the USP12-DMWD-WDR48 deubiquitinating complex. Interacts with PHLPP1. Interacts with RAD51AP1; the interaction is direct and promotes formation of a trimeric complex with RAD51 via RAD51AP1. Interacts with ATAD5; the interaction regulates USP1-mediated PCNA deubiquitination. Interacts with RAD51; the interaction is enhanced under replication stress. Interacts with ITCH; the interaction is more efficient when both USP12 and WDR48/UAF1 are involved and may facilitate recruitment of the USP12 deubiquitinating complex to Notch. As to quaternary structure, (Microbial infection) Interacts with papillomavirus HPV11 E1 protein. (Microbial infection) Interacts with Saimiriine herpesvirus TIP protein. In terms of assembly, (Microbial infection) Interacts with human cytomegalovirus protein UL138. As to quaternary structure, (Microbial infection) Interacts with Epstein-Barr virus protein EBNA3. As to expression, ubiquitous.

It localises to the nucleus. It is found in the cytoplasm. The protein resides in the lysosome. The protein localises to the late endosome. Its function is as follows. Regulator of deubiquitinating complexes, which acts as a strong activator of USP1, USP12 and USP46. Enhances the USP1-mediated deubiquitination of FANCD2; USP1 being almost inactive by itself. Activates deubiquitination by increasing the catalytic turnover without increasing the affinity of deubiquitinating enzymes for the substrate. Also activates deubiquitinating activity of complexes containing USP12. In complex with USP12, acts as a potential tumor suppressor by positively regulating PHLPP1 stability. Docks at the distal end of the USP12 fingers domain and induces a cascade of structural changes leading to the activation of the enzyme. Together with RAD51AP1, promotes DNA repair by stimulating RAD51-mediated homologous recombination. Binds single-stranded DNA (ssDNA) and double-stranded DNA (dsDNA). DNA-binding is required both for USP1-mediated deubiquitination of FANCD2 and stimulation of RAD51-mediated homologous recombination: both WDR48/UAF1 and RAD51AP1 have coordinated role in DNA-binding during these processes. Together with ATAD5 and by regulating USP1 activity, has a role in PCNA-mediated translesion synthesis (TLS) by deubiquitinating monoubiquitinated PCNA. Together with ATAD5, has a role in recruiting RAD51 to stalled forks during replication stress. In terms of biological role, (Microbial infection) In case of infection by Herpesvirus saimiri, may play a role in vesicular transport or membrane fusion events necessary for transport to lysosomes. Induces lysosomal vesicle formation via interaction with Herpesvirus saimiri tyrosine kinase-interacting protein (TIP). Subsequently, TIP recruits tyrosine-protein kinase LCK, resulting in down-regulation of T-cell antigen receptor TCR. May play a role in generation of enlarged endosomal vesicles via interaction with TIP. In case of infection by papillomavirus HPV11, promotes the maintenance of the viral genome via its interaction with HPV11 helicase E1. In Homo sapiens (Human), this protein is WD repeat-containing protein 48.